The following is a 271-amino-acid chain: tRNA pseudouridine synthase A (271 aa).

The Nucleophile role is filled by aspartate 56. Residue tyrosine 120 participates in substrate binding.

The protein belongs to the tRNA pseudouridine synthase TruA family. Homodimer.

The enzyme catalyses uridine(38/39/40) in tRNA = pseudouridine(38/39/40) in tRNA. Functionally, formation of pseudouridine at positions 38, 39 and 40 in the anticodon stem and loop of transfer RNAs. In Janthinobacterium sp. (strain Marseille) (Minibacterium massiliensis), this protein is tRNA pseudouridine synthase A.